Consider the following 301-residue polypeptide: 4-hydroxy-tetrahydrodipicolinate synthase (301 aa).

Thr50 is a pyruvate binding site. The active-site Proton donor/acceptor is the Tyr138. Lys167 (schiff-base intermediate with substrate) is an active-site residue. Ile209 is a binding site for pyruvate.

It belongs to the DapA family. In terms of assembly, homotetramer; dimer of dimers.

Its subcellular location is the cytoplasm. The enzyme catalyses L-aspartate 4-semialdehyde + pyruvate = (2S,4S)-4-hydroxy-2,3,4,5-tetrahydrodipicolinate + H2O + H(+). The protein operates within amino-acid biosynthesis; L-lysine biosynthesis via DAP pathway; (S)-tetrahydrodipicolinate from L-aspartate: step 3/4. Catalyzes the condensation of (S)-aspartate-beta-semialdehyde [(S)-ASA] and pyruvate to 4-hydroxy-tetrahydrodipicolinate (HTPA). This Sorangium cellulosum (strain So ce56) (Polyangium cellulosum (strain So ce56)) protein is 4-hydroxy-tetrahydrodipicolinate synthase.